The sequence spans 250 residues: NAD-dependent protein deacetylase (250 aa).

The 244-residue stretch at 1 to 244 (MECDKVGDLL…PCVVDYIKSQ (244 aa)) folds into the Deacetylase sirtuin-type domain. NAD(+) contacts are provided by alanine 22, threonine 26, phenylalanine 33, arginine 34, glutamine 98, isoleucine 100, aspartate 101, and histidine 116. Phenylalanine 33 is a nicotinamide binding site. Nicotinamide-binding residues include isoleucine 100 and aspartate 101. Histidine 116 acts as the Proton acceptor in catalysis. The Zn(2+) site is built by cysteine 124, cysteine 127, cysteine 149, and cysteine 151. NAD(+) is bound by residues serine 187, serine 188, asparagine 212, and valine 230.

Belongs to the sirtuin family. Class U subfamily. It depends on Zn(2+) as a cofactor.

The protein localises to the cytoplasm. The catalysed reaction is N(6)-acetyl-L-lysyl-[protein] + NAD(+) + H2O = 2''-O-acetyl-ADP-D-ribose + nicotinamide + L-lysyl-[protein]. NAD-dependent protein deacetylase which modulates the activities of several enzymes which are inactive in their acetylated form. Deacetylates the N-terminal lysine residue of Alba, the major archaeal chromatin protein and that, in turn, increases Alba's DNA binding affinity, thereby repressing transcription. The polypeptide is NAD-dependent protein deacetylase (Sulfurisphaera tokodaii (strain DSM 16993 / JCM 10545 / NBRC 100140 / 7) (Sulfolobus tokodaii)).